The primary structure comprises 317 residues: Lipoyl synthase (317 aa).

Residues 1–22 (MVTVVNTLNRPRHPEKQNRPET) are disordered. Positions 12-22 (RHPEKQNRPET) are enriched in basic and acidic residues. 7 residues coordinate [4Fe-4S] cluster: Cys57, Cys62, Cys68, Cys83, Cys87, Cys90, and Ser296. One can recognise a Radical SAM core domain in the interval 69–285 (WEKKHATFMI…ETVAYAKGFL (217 aa)).

It belongs to the radical SAM superfamily. Lipoyl synthase family. Requires [4Fe-4S] cluster as cofactor.

The protein localises to the cytoplasm. The enzyme catalyses [[Fe-S] cluster scaffold protein carrying a second [4Fe-4S](2+) cluster] + N(6)-octanoyl-L-lysyl-[protein] + 2 oxidized [2Fe-2S]-[ferredoxin] + 2 S-adenosyl-L-methionine + 4 H(+) = [[Fe-S] cluster scaffold protein] + N(6)-[(R)-dihydrolipoyl]-L-lysyl-[protein] + 4 Fe(3+) + 2 hydrogen sulfide + 2 5'-deoxyadenosine + 2 L-methionine + 2 reduced [2Fe-2S]-[ferredoxin]. It participates in protein modification; protein lipoylation via endogenous pathway; protein N(6)-(lipoyl)lysine from octanoyl-[acyl-carrier-protein]: step 2/2. Catalyzes the radical-mediated insertion of two sulfur atoms into the C-6 and C-8 positions of the octanoyl moiety bound to the lipoyl domains of lipoate-dependent enzymes, thereby converting the octanoylated domains into lipoylated derivatives. The sequence is that of Lipoyl synthase from Azorhizobium caulinodans (strain ATCC 43989 / DSM 5975 / JCM 20966 / LMG 6465 / NBRC 14845 / NCIMB 13405 / ORS 571).